The following is a 243-amino-acid chain: Probable fructoselysine utilization operon transcriptional repressor (243 aa).

The region spanning 10-78 (QLLYATVRQR…QGKGTFVQSQ (69 aa)) is the HTH gntR-type domain. Positions 38–57 (ENELCTQYNVSRITIRKAIS) form a DNA-binding region, H-T-H motif.

It participates in carbohydrate metabolism; fructoselysine degradation [regulation]. In terms of biological role, may regulate the transcription of the frlABCDR operon, involved in the utilization of fructoselysine and psicoselysine. The polypeptide is Probable fructoselysine utilization operon transcriptional repressor (Escherichia coli (strain K12)).